The primary structure comprises 327 residues: Ribonucleoside-diphosphate reductase small chain (327 aa).

D70, E101, and H104 together coordinate Fe cation. The active site involves Y108. The Fe cation site is built by E164, E198, and H201.

This sequence belongs to the ribonucleoside diphosphate reductase small chain family. As to quaternary structure, heterotetramer composed of a homodimer of the large subunit (R1) and a homodimer of the small subunit (R2). Larger multisubunit protein complex are also active, composed of (R1)n(R2)n. It depends on Fe cation as a cofactor.

The enzyme catalyses a 2'-deoxyribonucleoside 5'-diphosphate + [thioredoxin]-disulfide + H2O = a ribonucleoside 5'-diphosphate + [thioredoxin]-dithiol. Ribonucleoside-diphosphate reductase holoenzyme provides the precursors necessary for viral DNA synthesis. Allows virus growth in non-dividing cells. Catalyzes the biosynthesis of deoxyribonucleotides from the corresponding ribonucleotides. In Ornithodoros (relapsing fever ticks), this protein is Ribonucleoside-diphosphate reductase small chain.